Consider the following 288-residue polypeptide: Translocon-associated protein subunit alpha (288 aa).

Residues 1 to 28 (MFNFGSKILVLFLVAFPCGLISFGRVSA) form the signal peptide. The Lumenal segment spans residues 29-208 (DSESAEDIFP…ELEEGLDGET (180 aa)). The tract at residues 34 to 69 (EDIFPDSTVDEEEEEEEDEVLVEEDQVPGSETEDDI) is disordered. Residues asparagine 137 and asparagine 192 are each glycosylated (N-linked (GlcNAc...) asparagine). Residues 209–229 (IFMYIFLTGLVVLAVFGMYQV) traverse the membrane as a helical segment. Topologically, residues 230-288 (LESRTRKRFPVKVETGTGGMNGVDISWIPQETLNIMSKASASPKASPRKRTKRAVGVDQ) are cytoplasmic. The tract at residues 267-288 (KASASPKASPRKRTKRAVGVDQ) is disordered.

This sequence belongs to the TRAP-alpha family. In terms of assembly, heterotetramer of TRAP-alpha, TRAP-beta, TRAP-delta and TRAP-gamma. Post-translationally, phosphorylated in its cytoplasmic tail.

The protein resides in the endoplasmic reticulum membrane. Functionally, TRAP proteins are part of a complex whose function is to bind calcium to the ER membrane and thereby regulate the retention of ER resident proteins. May be involved in the recycling of the translocation apparatus after completion of the translocation process or may function as a membrane-bound chaperone facilitating folding of translocated proteins. This is Translocon-associated protein subunit alpha (ssr1) from Oncorhynchus mykiss (Rainbow trout).